A 259-amino-acid chain; its full sequence is Phosphatidylglycerol--prolipoprotein diacylglyceryl transferase (259 aa).

Helical transmembrane passes span 9–29 (IIFS…VVGI), 55–75 (FITY…VLLY), 92–112 (EGGM…YLFC), and 117–137 (INFL…LFLG). A 1,2-diacyl-sn-glycero-3-phospho-(1'-sn-glycerol) is bound at residue Arg138. The next 3 helical transmembrane spans lie at 172–192 (QLYE…YATF), 201–221 (GLNS…IEIF), and 228–248 (IGFI…MLLL).

This sequence belongs to the Lgt family.

The protein resides in the cell inner membrane. The enzyme catalyses L-cysteinyl-[prolipoprotein] + a 1,2-diacyl-sn-glycero-3-phospho-(1'-sn-glycerol) = an S-1,2-diacyl-sn-glyceryl-L-cysteinyl-[prolipoprotein] + sn-glycerol 1-phosphate + H(+). It functions in the pathway protein modification; lipoprotein biosynthesis (diacylglyceryl transfer). Its function is as follows. Catalyzes the transfer of the diacylglyceryl group from phosphatidylglycerol to the sulfhydryl group of the N-terminal cysteine of a prolipoprotein, the first step in the formation of mature lipoproteins. The protein is Phosphatidylglycerol--prolipoprotein diacylglyceryl transferase of Rickettsia felis (strain ATCC VR-1525 / URRWXCal2) (Rickettsia azadi).